The sequence spans 664 residues: MPAVDKLLLEEALQDSPQTRSLLSVFEEDAGTLTDYTNQLLQAMQRVYGAQNEMCLATQQLSKQLLAYEKQNFALGKGDEEVISTLHYFSKVVDELNLLHTELAKQLADTMVLPIIQFREKDLTEVSTLKDLFGLASNEHDLSMAKYSRLPKKKENEKVKTEVGKEVAAARRKQHLSSLQYYCALNALQYRKQMAMMEPMIGFAHGQINFFKKGAEMFSKRMDSFLSSVADMVQSIQVELEAEAEKMRVSQQELLSVDESVYTPDSDVAAPQINRNLIQKAGYLNLRNKTGLVTTTWERLYFFTQGGNLMCQPRGAVAGGLIQDLDNCSVMAVDCEDRRYCFQITTPNGKSGIILQAESRKENEEWICAINNISRQIYLTDNPEAVAIKLNQTALQAVTPITSFGKKQESSCPSQNLKNSEMENENDKIVPKATASLPEAEELIAPGTPIQFDIVLPATEFLDQNRGSRRTNPFGETEDESFPEAEDSLLQQMFIVRFLGSMAVKTDSTTEVIYEAMRQVLAARAIHNIFRMTESHLMVTSQSLRLIDPQTQVSRANFELTSVTQFAAHQENKRLVGFVIRVPESTGEESLSTYIFESNSEGEKICYAINLGKEIIEVQKDPEALAQLMLSIPLTNDGKYVLLNDQPDDDDGNPNEHRGAESEA.

A required for RAB5A binding region spans residues 1-428 (MPAVDKLLLE…NSEMENENDK (428 aa)). In terms of domain architecture, BAR spans 3-268 (AVDKLLLEEA…ESVYTPDSDV (266 aa)). In terms of domain architecture, PH spans 277-375 (LIQKAGYLNL…WICAINNISR (99 aa)). The region spanning 488–637 (SLLQQMFIVR…LMLSIPLTND (150 aa)) is the PID domain. Residues 643 to 664 (LNDQPDDDDGNPNEHRGAESEA) are disordered. Residues 654-664 (PNEHRGAESEA) are compositionally biased toward basic and acidic residues.

In terms of assembly, homodimer. Homotetramer. Binds RAB5A/Rab5 through an N-terminal domain. This interaction is essential for its recruitment to endosomal membranes as well as its role in cell proliferation. Binds subunits of the NuRD/MeCP1 complex. Interacts with FSHR; interaction is independent of follicle stimulating hormone stimulation. Interacts with APPL1; the interaction is decreased by adiponectin in a time-dependent manner. Forms a complex comprising APPL1, RUVBL2, CTNNB1, HDAC1 and HDAC2; interaction reduces interaction between CTNNB1, HDAC1, HDAC2 and RUVBL2 leading to the decrease of deacetylase activity of this complex; affects the recruitment of repressive complexes to the Wnt target genes. Interacts (via BAR domain) with TBC1D1; interaction is dependent of TBC1D1 phosphorylation at 'Ser-235'; interaction diminishes the phosphorylation of TBC1D1 at 'Thr-596', resulting in inhibition of SLC2A4 translocation and glucose uptake. Interacts with ANXA2; targets APPL2 to endosomes and acting in parallel to RAB5A. Interacts with RAB31 (in GTP-bound form); interaction contributes to or enhances recruitment of APPL2 to the phagosomes; interaction enhances Fc-gamma receptor-mediated phagocytosis through PI3K/Akt signaling in macrophages. Interacts with PIK3R1; forms a complex with PIK3R1 and APPL1. Interacts (via BAR domain) with ADIPOR1; hinders the accessibility of APPL1 to ADIPOR1; negatively regulates adiponectin signaling; ADIPOQ dissociates this interaction and facilitates the recruitment of APPL1 to ADIPOR1. Interacts (via BAR domain) with ADIPOR2; ADIPOQ dissociates this interaction. In terms of tissue distribution, high levels in brain, heart, kidney and skeletal muscle.

Its subcellular location is the early endosome membrane. It is found in the nucleus. The protein resides in the cell membrane. The protein localises to the endosome membrane. It localises to the cytoplasm. Its subcellular location is the cytoplasmic vesicle. It is found in the phagosome. The protein resides in the cell projection. The protein localises to the ruffle. It localises to the ruffle membrane. Its subcellular location is the phagosome membrane. Multifunctional adapter protein that binds to various membrane receptors, nuclear factors and signaling proteins to regulate many processes, such as cell proliferation, immune response, endosomal trafficking and cell metabolism. Regulates signaling pathway leading to cell proliferation through interaction with RAB5A and subunits of the NuRD/MeCP1 complex. Plays a role in immune response by modulating phagocytosis, inflammatory and innate immune responses. In macrophages, enhances Fc-gamma receptor-mediated phagocytosis through interaction with RAB31 leading to activation of PI3K/Akt signaling. In response to LPS, modulates inflammatory responses by playing a key role on the regulation of TLR4 signaling and in the nuclear translocation of RELA/NF-kappa-B p65 and the secretion of pro- and anti-inflammatory cytokines. Also functions as a negative regulator of innate immune response via inhibition of AKT1 signaling pathway by forming a complex with APPL1 and PIK3R1. Plays a role in endosomal trafficking of TGFBR1 from the endosomes to the nucleus. Plays a role in cell metabolism by regulating adiponecting ans insulin signaling pathways and adaptative thermogenesis. In muscle, negatively regulates adiponectin-simulated glucose uptake and fatty acid oxidation by inhibiting adiponectin signaling pathway through APPL1 sequestration thereby antagonizing APPL1 action. In muscles, negatively regulates insulin-induced plasma membrane recruitment of GLUT4 and glucose uptake through interaction with TBC1D1. Plays a role in cold and diet-induced adaptive thermogenesis by activating ventromedial hypothalamus (VMH) neurons throught AMPK inhibition which enhances sympathetic outflow to subcutaneous white adipose tissue (sWAT), sWAT beiging and cold tolerance. Also plays a role in other signaling pathways namely Wnt/beta-catenin, HGF and glucocorticoid receptor signaling. Positive regulator of beta-catenin/TCF-dependent transcription through direct interaction with RUVBL2/reptin resulting in the relief of RUVBL2-mediated repression of beta-catenin/TCF target genes by modulating the interactions within the beta-catenin-reptin-HDAC complex. May affect adult neurogenesis in hippocampus and olfactory system via regulating the sensitivity of glucocorticoid receptor. Required for fibroblast migration through HGF cell signaling. This Homo sapiens (Human) protein is DCC-interacting protein 13-beta.